Consider the following 334-residue polypeptide: Putative fatty acid elongase 1 (334 aa).

The Lumenal segment spans residues 1–51 (MDLTGAHMLKIHRPSIDHPFGVDLWHLFEQLSIKTIGWNPSEFEYIPGKTP). Residues 52–72 (MSQWSSVIVSITAYYVIILSG) form a helical membrane-spanning segment. At 73 to 86 (RAIMTNRKPLKQRR) the chain is on the cytoplasmic side. Residues 87-107 (LFQLHNFILTIISGALLALLV) form a helical membrane-spanning segment. At 108–135 (EEVFRNYMRNGLFYCVCDSRHFTQRLVT) the chain is on the lumenal side. The chain crosses the membrane as a helical span at residues 136-156 (LYYLNYLTKYLELMDTVFLFL). The Cytoplasmic segment spans residues 157–160 (KKKP). Residues 161–181 (LAFLHCYHHGITALLCFTQLL) form a helical membrane-spanning segment. Topologically, residues 182–187 (GRTSVQ) are lumenal. The helical transmembrane segment at 188–208 (WGVIGLNLYVHVIMYSYYFLA) threads the bilayer. Over 209 to 224 (ACGRRVWWKQWVTRVQ) the chain is Cytoplasmic. A helical membrane pass occupies residues 225–245 (IIQFVLDLILCYFGTYSHIAF). Residues 246 to 260 (RYFPWLPHVGDCSGS) are Lumenal-facing. Residues 261–281 (LFAAFFGCGVLSSYLFLFIGF) traverse the membrane as a helical segment. The Cytoplasmic portion of the chain corresponds to 282 to 334 (YINTYIKRGAKKNQRKAAGKADNTSVAAAAGSEALAATTATNASPFSARSRKL). At Ser325 the chain carries Phosphoserine.

This sequence belongs to the ELO family.

It localises to the endoplasmic reticulum membrane. The enzyme catalyses a very-long-chain acyl-CoA + malonyl-CoA + H(+) = a very-long-chain 3-oxoacyl-CoA + CO2 + CoA. May be involved in the synthesis of very long chain fatty acids. This chain is Putative fatty acid elongase 1, found in Schizosaccharomyces pombe (strain 972 / ATCC 24843) (Fission yeast).